Reading from the N-terminus, the 475-residue chain is Aspartyl/glutamyl-tRNA(Asn/Gln) amidotransferase subunit B (475 aa).

The protein belongs to the GatB/GatE family. GatB subfamily. Heterotrimer of A, B and C subunits.

The catalysed reaction is L-glutamyl-tRNA(Gln) + L-glutamine + ATP + H2O = L-glutaminyl-tRNA(Gln) + L-glutamate + ADP + phosphate + H(+). It catalyses the reaction L-aspartyl-tRNA(Asn) + L-glutamine + ATP + H2O = L-asparaginyl-tRNA(Asn) + L-glutamate + ADP + phosphate + 2 H(+). In terms of biological role, allows the formation of correctly charged Asn-tRNA(Asn) or Gln-tRNA(Gln) through the transamidation of misacylated Asp-tRNA(Asn) or Glu-tRNA(Gln) in organisms which lack either or both of asparaginyl-tRNA or glutaminyl-tRNA synthetases. The reaction takes place in the presence of glutamine and ATP through an activated phospho-Asp-tRNA(Asn) or phospho-Glu-tRNA(Gln). The polypeptide is Aspartyl/glutamyl-tRNA(Asn/Gln) amidotransferase subunit B (Lysinibacillus sphaericus (strain C3-41)).